We begin with the raw amino-acid sequence, 240 residues long: Probable 2-phosphosulfolactate phosphatase (240 aa).

It belongs to the ComB family. Requires Mg(2+) as cofactor.

It catalyses the reaction (2R)-O-phospho-3-sulfolactate + H2O = (2R)-3-sulfolactate + phosphate. The protein is Probable 2-phosphosulfolactate phosphatase of Clostridium kluyveri (strain NBRC 12016).